A 727-amino-acid polypeptide reads, in one-letter code: Synaptic vesicle glycoprotein 2C (727 aa).

Positions 1–57 (MEDSYKDRTSLMKGAKDIAREVKKQTVKKVNQAVDRAQDEYTQRSYSRFQDEEDDDD) are interaction with SYT1. Residues 1–154 (MEDSYKDRTS…CGHGRFQWAL (154 aa)) lie on the Cytoplasmic side of the membrane. Disordered regions lie at residues 24–84 (KQTV…GHDE) and 109–128 (VGQP…SERR). Ser75 and Ser76 each carry phosphoserine. The residue at position 79 (Thr79) is a Phosphothreonine. Positions 113–128 (KGDEYKDRRELESERR) are enriched in basic and acidic residues. Residues 155–175 (FFVLGMALMADGVEVFVVGFV) traverse the membrane as a helical segment. Residues 176-191 (LPSAETDLCIPNSGSG) lie on the Extracellular side of the membrane. A helical transmembrane segment spans residues 192–212 (WLGSIVYLGMMVGAFFWGGLA). At 213–226 (DKVGRKQSLLICMS) the chain is on the cytoplasmic side. Residues 227 to 247 (VNGFFAFLSSFVQGYGFFLFC) form a helical membrane-spanning segment. Residue Arg248 is a topological domain, extracellular. A helical membrane pass occupies residues 249 to 269 (LLSGFGIGGAIPTVFSYFAEV). Over 270–280 (LAREKRGEHLS) the chain is Cytoplasmic. A helical transmembrane segment spans residues 281-301 (WLCMFWMIGGIYASAMAWAII). Residues 302-320 (PHYGWSFSMGSAYQFHSWR) are Extracellular-facing. A helical transmembrane segment spans residues 321–341 (VFVIVCALPCVSSVVALTFMP). Topologically, residues 342–437 (ESPRFLLEVG…PVRDNTIKLT (96 aa)) are cytoplasmic. Residues 438–458 (IVWFTLSFGYYGLSVWFPDVI) traverse the membrane as a helical segment. The Extracellular portion of the chain corresponds to 459–578 (KPLQSDEYAL…CQITFDDDYS (120 aa)). Phosphotyrosine is present on Tyr466. 5 N-linked (GlcNAc...) asparagine glycosylation sites follow: Asn480, Asn484, Asn534, Asn559, and Asn565. The segment at 519 to 563 (SCTFEDVTSVNTYFKNCTFIDTVFDNTDFEPYKFIDSEFKNCSFF) is (Microbial infection) C.botulinum neurotoxin type A-binding. The helical transmembrane segment at 579–599 (AYWIYFVNFLGTLAVLPGNIV) threads the bilayer. Residues 600–609 (SALLMDRIGR) are Cytoplasmic-facing. Residues 610 to 630 (LTMLGGSMVLSGISCFFLWFG) traverse the membrane as a helical segment. Over 631-636 (TSESMM) the chain is Extracellular. Residues 637–657 (IGMLCLYNGLTISAWNSLDVV) form a helical membrane-spanning segment. Topologically, residues 658–669 (TVELYPTDRRAT) are cytoplasmic. A helical transmembrane segment spans residues 670 to 690 (GFGFLNALCKAAAVLGNLIFG). Residues 691–698 (SLVSITKS) lie on the Extracellular side of the membrane. Residues 699 to 719 (IPILLASTVLVCGGLVGLCLP) form a helical membrane-spanning segment. Residues 720–727 (DTRTQVLM) lie on the Cytoplasmic side of the membrane.

This sequence belongs to the major facilitator superfamily. In terms of assembly, interacts with SYT1 in a calcium-dependent manner. As to quaternary structure, (Microbial infection) Interacts with C.botulinum neurotoxin type A1 and type A2 (BoNT/A, botA). Interaction is improved by glycosylation of SV2. In terms of processing, N-glycosylated. Upon expression in a kidney cell line the most abundant glycan on Asn-534 is GlcNAc(3)Hex(5), while on Asn-559 and Asn-565 the most abundant glycan is GlcNAc2Fuc1Man3GlcNAc3Gal3. Both Asn-559 and Asn-565 have a high degree of glycan heterogeneity.

The protein localises to the cytoplasmic vesicle. Its subcellular location is the secretory vesicle. The protein resides in the synaptic vesicle membrane. In terms of biological role, plays a role in the control of regulated secretion in neural and endocrine cells, enhancing selectively low-frequency neurotransmission. Positively regulates vesicle fusion by maintaining the readily releasable pool of secretory vesicles. (Microbial infection) Receptor for C.botulinum neurotoxin type A (BoNT/A, botA); the toxin probably binds via extracellular loop 4. Recognition by BoNT/A relies on both protein-protein and protein-N-glycosylation; glycosylation of Asn-559 increases its affinity for BoNT/A. Also serves as a receptor for the closely related C.botulinum neurotoxin type A2; glycosylation is not essential but enhances the interaction. Functionally, (Microbial infection) Possible receptor for C.botulinum neurotoxin type D (BoNT/D, botD); note that type D does not usually infect humans. This Homo sapiens (Human) protein is Synaptic vesicle glycoprotein 2C (SV2C).